Reading from the N-terminus, the 436-residue chain is Serine/threonine-protein kinase 40 (436 aa).

Basic and acidic residues predominate over residues 1 to 10 (MKRRASDRGA). A disordered region spans residues 1-25 (MKRRASDRGAGETSARAKALGSGIS). The Protein kinase domain maps to 35–332 (FILGPRLGNS…DVLEALSSII (298 aa)). ATP is bound by residues 41-49 (LGNSPVPSI) and K66. D197 (proton acceptor) is an active-site residue. Residues 396–417 (RSWVPKRQSGAGVPPVRRLGHD) form a disordered region.

The protein belongs to the protein kinase superfamily. CAMK Ser/Thr protein kinase family.

The protein resides in the nucleus. Its subcellular location is the cytoplasm. The enzyme catalyses L-seryl-[protein] + ATP = O-phospho-L-seryl-[protein] + ADP + H(+). It carries out the reaction L-threonyl-[protein] + ATP = O-phospho-L-threonyl-[protein] + ADP + H(+). Its function is as follows. May be a negative regulator of NF-kappa-B and p53-mediated gene transcription. The sequence is that of Serine/threonine-protein kinase 40 (STK40) from Bos taurus (Bovine).